Here is a 158-residue protein sequence, read N- to C-terminus: HTH-type transcriptional repressor NicR (158 aa).

In terms of domain architecture, HTH marR-type spans Thr-20–Asp-152. A DNA-binding region (H-T-H motif) is located at residues Gln-66–Ala-89.

It participates in cofactor degradation; nicotinate degradation [regulation]. Transcriptional repressor for the nicCDEFTP and nicXR operons, encoding the lower aerobic nicotinate degradation pathway. Acts under non-induced conditions: repression of the nicCDEFTP and nicXR operons becomes alleviated in presence of 6-hydroxynicotinate (6HNA). The chain is HTH-type transcriptional repressor NicR (nicR) from Pseudomonas putida (strain ATCC 47054 / DSM 6125 / CFBP 8728 / NCIMB 11950 / KT2440).